The sequence spans 360 residues: 3-isopropylmalate dehydrogenase (360 aa).

NAD(+) is bound at residue 76-89; the sequence is GPKWEPLDYSLRPE. Substrate is bound by residues R96, R106, R134, and D224. Mg(2+) is bound by residues D224, D248, and D252. NAD(+) is bound at residue 282–294; it reads GSAPDIAGRGIAN.

The protein belongs to the isocitrate and isopropylmalate dehydrogenases family. LeuB type 1 subfamily. Homodimer. The cofactor is Mg(2+). Mn(2+) serves as cofactor.

It localises to the cytoplasm. It catalyses the reaction (2R,3S)-3-isopropylmalate + NAD(+) = 4-methyl-2-oxopentanoate + CO2 + NADH. The protein operates within amino-acid biosynthesis; L-leucine biosynthesis; L-leucine from 3-methyl-2-oxobutanoate: step 3/4. In terms of biological role, catalyzes the oxidation of 3-carboxy-2-hydroxy-4-methylpentanoate (3-isopropylmalate) to 3-carboxy-4-methyl-2-oxopentanoate. The product decarboxylates to 4-methyl-2 oxopentanoate. In Methylococcus capsulatus (strain ATCC 33009 / NCIMB 11132 / Bath), this protein is 3-isopropylmalate dehydrogenase.